The primary structure comprises 154 residues: Putative pre-16S rRNA nuclease (154 aa).

Belongs to the YqgF nuclease family.

The protein localises to the cytoplasm. In terms of biological role, could be a nuclease involved in processing of the 5'-end of pre-16S rRNA. The sequence is that of Putative pre-16S rRNA nuclease from Rickettsia peacockii (strain Rustic).